A 142-amino-acid polypeptide reads, in one-letter code: Fluoride-specific ion channel FluC 1 (142 aa).

The next 4 helical transmembrane spans lie at 23–43 (VNIA…YLID), 54–74 (LPLG…GLIG), 79–99 (GWLL…FSTF), and 116–136 (LGNV…AVSL). Positions 91 and 94 each coordinate Na(+).

The protein belongs to the fluoride channel Fluc/FEX (TC 1.A.43) family.

It localises to the cell membrane. It carries out the reaction fluoride(in) = fluoride(out). Na(+) is not transported, but it plays an essential structural role and its presence is essential for fluoride channel function. Functionally, fluoride-specific ion channel. Important for reducing fluoride concentration in the cell, thus reducing its toxicity. This Nocardia farcinica (strain IFM 10152) protein is Fluoride-specific ion channel FluC 1.